A 336-amino-acid polypeptide reads, in one-letter code: tRNA N6-adenosine threonylcarbamoyltransferase (336 aa).

Residues histidine 115 and histidine 119 each contribute to the Fe cation site. Residues 137 to 141, aspartate 170, glycine 183, aspartate 187, and asparagine 276 contribute to the substrate site; that span reads LVSGG. Residue aspartate 302 coordinates Fe cation.

Belongs to the KAE1 / TsaD family. Fe(2+) is required as a cofactor.

It is found in the cytoplasm. The catalysed reaction is L-threonylcarbamoyladenylate + adenosine(37) in tRNA = N(6)-L-threonylcarbamoyladenosine(37) in tRNA + AMP + H(+). In terms of biological role, required for the formation of a threonylcarbamoyl group on adenosine at position 37 (t(6)A37) in tRNAs that read codons beginning with adenine. Is involved in the transfer of the threonylcarbamoyl moiety of threonylcarbamoyl-AMP (TC-AMP) to the N6 group of A37, together with TsaE and TsaB. TsaD likely plays a direct catalytic role in this reaction. This is tRNA N6-adenosine threonylcarbamoyltransferase from Streptococcus suis (strain 98HAH33).